Reading from the N-terminus, the 173-residue chain is NADH-ubiquinone oxidoreductase chain 6 (173 aa).

6 helical membrane-spanning segments follow: residues 1–21 (MTYF…AVAS), 27–47 (YGVV…LSLG), 48–68 (VSFV…VVFV), 87–107 (VVGY…VGGF), 113–133 (FGVV…FSGV), and 139–159 (CGVG…FVVL).

Belongs to the complex I subunit 6 family.

It is found in the mitochondrion membrane. The catalysed reaction is a ubiquinone + NADH + 5 H(+)(in) = a ubiquinol + NAD(+) + 4 H(+)(out). Core subunit of the mitochondrial membrane respiratory chain NADH dehydrogenase (Complex I) that is believed to belong to the minimal assembly required for catalysis. Complex I functions in the transfer of electrons from NADH to the respiratory chain. The immediate electron acceptor for the enzyme is believed to be ubiquinone. The chain is NADH-ubiquinone oxidoreductase chain 6 (MT-ND6) from Cepphus grylle (Black guillemot).